The chain runs to 877 residues: Leucine--tRNA ligase (877 aa).

Positions 43 to 53 match the 'HIGH' region motif; that stretch reads PYPSGRIHMGH. A 'KMSKS' region motif is present at residues 628-632; that stretch reads KMSKS. Lys631 lines the ATP pocket.

The protein belongs to the class-I aminoacyl-tRNA synthetase family.

It is found in the cytoplasm. The catalysed reaction is tRNA(Leu) + L-leucine + ATP = L-leucyl-tRNA(Leu) + AMP + diphosphate. This chain is Leucine--tRNA ligase, found in Brucella abortus (strain S19).